The chain runs to 496 residues: uncharacterized protein (496 aa).

Basic and acidic residues predominate over residues Leu-118–Asn-129. Positions Leu-118–Ser-187 are disordered. The span at Thr-151–Ser-187 shows a compositional bias: polar residues.

This is an uncharacterized protein from Acanthamoeba polyphaga mimivirus (APMV).